We begin with the raw amino-acid sequence, 311 residues long: Dihydroorotate dehydrogenase A (fumarate) (311 aa).

Residues serine 19 and 43–44 (KS) contribute to the FMN site. Residues lysine 43, 67–71 (NSMGL), and asparagine 127 each bind substrate. Residue asparagine 127 participates in FMN binding. Cysteine 130 acts as the Nucleophile in catalysis. FMN is bound by residues lysine 164 and valine 192. Residue 193 to 194 (NS) coordinates substrate. FMN is bound by residues glycine 221, 249–250 (GG), and 271–272 (GT).

It belongs to the dihydroorotate dehydrogenase family. Type 1 subfamily. In terms of assembly, homodimer. FMN serves as cofactor.

Its subcellular location is the cytoplasm. The catalysed reaction is (S)-dihydroorotate + fumarate = orotate + succinate. It participates in pyrimidine metabolism; UMP biosynthesis via de novo pathway. In terms of biological role, catalyzes the conversion of dihydroorotate to orotate with fumarate as the electron acceptor. This is Dihydroorotate dehydrogenase A (fumarate) (pyrDA) from Lactococcus lactis subsp. cremoris (Streptococcus cremoris).